Reading from the N-terminus, the 290-residue chain is Small ribosomal subunit biogenesis GTPase RsgA (290 aa).

Residues 63-220 (KNELIRPPIA…IADTPGFSNL (158 aa)) enclose the CP-type G domain. Residues 112 to 115 (NKFD) and 162 to 170 (GPSGVGKST) each bind GTP. Cys-244, Cys-249, His-251, and Cys-257 together coordinate Zn(2+).

Belongs to the TRAFAC class YlqF/YawG GTPase family. RsgA subfamily. In terms of assembly, monomer. Associates with 30S ribosomal subunit, binds 16S rRNA. Requires Zn(2+) as cofactor.

The protein resides in the cytoplasm. In terms of biological role, one of several proteins that assist in the late maturation steps of the functional core of the 30S ribosomal subunit. Helps release RbfA from mature subunits. May play a role in the assembly of ribosomal proteins into the subunit. Circularly permuted GTPase that catalyzes slow GTP hydrolysis, GTPase activity is stimulated by the 30S ribosomal subunit. In Carboxydothermus hydrogenoformans (strain ATCC BAA-161 / DSM 6008 / Z-2901), this protein is Small ribosomal subunit biogenesis GTPase RsgA.